The following is a 1523-amino-acid chain: Lysophospholipase nte1 (1523 aa).

Residues 1–66 (MADGVTLVDS…LPPVPTTMAG (66 aa)) lie on the Cytoplasmic side of the membrane. A helical transmembrane segment spans residues 67–87 (WIGWVFSFFFQVIPSVLYWVI). The Lumenal portion of the chain corresponds to 88-109 (TFSTITLPTWLFTLFSMSLTFT). A helical membrane pass occupies residues 110–130 (MNFTTLLLIVLAMVSTISWFI). Topologically, residues 131 to 1523 (RYRFLNMYSR…RTMAPRRASI (1393 aa)) are cytoplasmic. Disordered stretches follow at residues 309–384 (VPNS…KSVH) and 524–545 (RAAT…GVSP). The span at 370 to 382 (ESRKHSSRKRRKS) shows a compositional bias: basic residues. A nucleoside 3',5'-cyclic phosphate is bound by residues 681-800 (GGTS…GAVA) and 841-961 (RLTS…IAQR). In terms of domain architecture, PNPLA spans 1220 to 1384 (LVLGGGGARG…IDNLTVDHMK (165 aa)). The short motif at 1224–1229 (GGGARG) is the GXGXXG element. The GXSXG signature appears at 1251–1255 (GTSIG). Ser1253 (nucleophile) is an active-site residue. Catalysis depends on Asp1371, which acts as the Proton acceptor. The short motif at 1371–1373 (DGG) is the DGA/G element. The segment at 1502 to 1523 (LPEETEEKKKLQRTMAPRRASI) is disordered.

The protein belongs to the NTE family.

It localises to the endoplasmic reticulum membrane. The enzyme catalyses a 1-acyl-sn-glycero-3-phosphocholine + H2O = sn-glycerol 3-phosphocholine + a fatty acid + H(+). With respect to regulation, inhibited by organophosphorus esters. Functionally, intracellular phospholipase B that catalyzes the double deacylation of phosphatidylcholine (PC) to glycerophosphocholine (GroPCho). Plays an important role in membrane lipid homeostasis. Responsible for the rapid PC turnover in response to inositol, elevated temperatures, or when choline is present in the growth medium. The sequence is that of Lysophospholipase nte1 (nte1) from Neosartorya fischeri (strain ATCC 1020 / DSM 3700 / CBS 544.65 / FGSC A1164 / JCM 1740 / NRRL 181 / WB 181) (Aspergillus fischerianus).